Here is a 291-residue protein sequence, read N- to C-terminus: Acetyl-coenzyme A carboxylase carboxyl transferase subunit beta (291 aa).

Residues 23-291 enclose the CoA carboxyltransferase N-terminal domain; that stretch reads VWHKCPSCTA…PPDLPVEESV (269 aa). 4 residues coordinate Zn(2+): cysteine 27, cysteine 30, cysteine 46, and cysteine 49. Residues 27-49 form a C4-type zinc finger; that stretch reads CPSCTAVLYRVELERNLEVCPKC.

Belongs to the AccD/PCCB family. In terms of assembly, acetyl-CoA carboxylase is a heterohexamer composed of biotin carboxyl carrier protein (AccB), biotin carboxylase (AccC) and two subunits each of ACCase subunit alpha (AccA) and ACCase subunit beta (AccD). The cofactor is Zn(2+).

The protein resides in the cytoplasm. The enzyme catalyses N(6)-carboxybiotinyl-L-lysyl-[protein] + acetyl-CoA = N(6)-biotinyl-L-lysyl-[protein] + malonyl-CoA. Its pathway is lipid metabolism; malonyl-CoA biosynthesis; malonyl-CoA from acetyl-CoA: step 1/1. Its function is as follows. Component of the acetyl coenzyme A carboxylase (ACC) complex. Biotin carboxylase (BC) catalyzes the carboxylation of biotin on its carrier protein (BCCP) and then the CO(2) group is transferred by the transcarboxylase to acetyl-CoA to form malonyl-CoA. In Coxiella burnetii (strain RSA 331 / Henzerling II), this protein is Acetyl-coenzyme A carboxylase carboxyl transferase subunit beta.